The primary structure comprises 389 residues: S-adenosylmethionine synthase (389 aa).

His15 serves as a coordination point for ATP. Residue Asp17 participates in Mg(2+) binding. Position 43 (Glu43) interacts with K(+). L-methionine-binding residues include Glu56 and Gln99. Residues 99–109 form a flexible loop region; the sequence is QSPDIAQGVNE. ATP is bound by residues 166–168, 234–235, Asp243, 249–250, Ala266, and Lys270; these read DAK, RF, and RK. Asp243 contacts L-methionine. Lys274 is an L-methionine binding site.

Belongs to the AdoMet synthase family. As to quaternary structure, homotetramer; dimer of dimers. It depends on Mg(2+) as a cofactor. Requires K(+) as cofactor.

The protein localises to the cytoplasm. The catalysed reaction is L-methionine + ATP + H2O = S-adenosyl-L-methionine + phosphate + diphosphate. It participates in amino-acid biosynthesis; S-adenosyl-L-methionine biosynthesis; S-adenosyl-L-methionine from L-methionine: step 1/1. Functionally, catalyzes the formation of S-adenosylmethionine (AdoMet) from methionine and ATP. The overall synthetic reaction is composed of two sequential steps, AdoMet formation and the subsequent tripolyphosphate hydrolysis which occurs prior to release of AdoMet from the enzyme. This Laribacter hongkongensis (strain HLHK9) protein is S-adenosylmethionine synthase.